A 265-amino-acid polypeptide reads, in one-letter code: Orotidine 5'-phosphate decarboxylase (265 aa).

Substrate contacts are provided by residues D38, 60 to 62 (KTH), 91 to 100 (DRKFADIGNT), Y213, and R232. Residue K93 is the Proton donor of the active site.

This sequence belongs to the OMP decarboxylase family.

The enzyme catalyses orotidine 5'-phosphate + H(+) = UMP + CO2. It functions in the pathway pyrimidine metabolism; UMP biosynthesis via de novo pathway; UMP from orotate: step 2/2. This Rhizopus oryzae (Mucormycosis agent) protein is Orotidine 5'-phosphate decarboxylase (pyrG).